The chain runs to 157 residues: MPRRRVVATREILPDPKFGSQTVAKFINHVMSHGKKSTAERIVYGALETVSQKRNIEDPVSFFEEVLENVRPMVEVKARRVGGATYQVPMEVRPSRRTALAMRWLAEAAAKRSEKSMALRLAGELNDAADGKGNAMKKRDEVHRMADANKAFSHYRF.

This sequence belongs to the universal ribosomal protein uS7 family. Part of the 30S ribosomal subunit. Contacts proteins S9 and S11.

One of the primary rRNA binding proteins, it binds directly to 16S rRNA where it nucleates assembly of the head domain of the 30S subunit. Is located at the subunit interface close to the decoding center, probably blocks exit of the E-site tRNA. This chain is Small ribosomal subunit protein uS7, found in Psychrobacter cryohalolentis (strain ATCC BAA-1226 / DSM 17306 / VKM B-2378 / K5).